The following is a 548-amino-acid chain: Membrane protein insertase YidC (548 aa).

The helical transmembrane segment at 6–26 threads the bilayer; it reads NLLVIALLFVSFMIWQAWEQD. Residues 28-56 are disordered; it reads NPQPQTQQTTQTTTTAAGSAADQGVPASG. A compositionally biased stretch (low complexity) spans 29 to 42; that stretch reads PQPQTQQTTQTTTT. Transmembrane regions (helical) follow at residues 350–370, 424–444, 458–478, and 499–519; these read FVGNWGFSIIIITFIVRGIMY, FPLIIQMPIFLALYYMLMGSI, LSAQDPYYILPILMGVTMFFI, and PVIFTVFFLWFPSGLVLYYIV.

This sequence belongs to the OXA1/ALB3/YidC family. Type 1 subfamily. Interacts with the Sec translocase complex via SecD. Specifically interacts with transmembrane segments of nascent integral membrane proteins during membrane integration.

Its subcellular location is the cell inner membrane. Required for the insertion and/or proper folding and/or complex formation of integral membrane proteins into the membrane. Involved in integration of membrane proteins that insert both dependently and independently of the Sec translocase complex, as well as at least some lipoproteins. Aids folding of multispanning membrane proteins. The polypeptide is Membrane protein insertase YidC (Salmonella dublin (strain CT_02021853)).